Consider the following 705-residue polypeptide: Ribosomal RNA large subunit methyltransferase K/L (705 aa).

Residues 43–154 (VVYRCCLWSR…GEKGILGFDL (112 aa)) form the THUMP domain.

The protein belongs to the methyltransferase superfamily. RlmKL family.

It is found in the cytoplasm. It carries out the reaction guanosine(2445) in 23S rRNA + S-adenosyl-L-methionine = N(2)-methylguanosine(2445) in 23S rRNA + S-adenosyl-L-homocysteine + H(+). The catalysed reaction is guanosine(2069) in 23S rRNA + S-adenosyl-L-methionine = N(2)-methylguanosine(2069) in 23S rRNA + S-adenosyl-L-homocysteine + H(+). In terms of biological role, specifically methylates the guanine in position 2445 (m2G2445) and the guanine in position 2069 (m7G2069) of 23S rRNA. This Aliivibrio salmonicida (strain LFI1238) (Vibrio salmonicida (strain LFI1238)) protein is Ribosomal RNA large subunit methyltransferase K/L.